The following is a 365-amino-acid chain: uncharacterized protein (365 aa).

A Radical SAM core domain is found at 45–289 (FSIGKSLTII…LKEVKKSNPK (245 aa)). [4Fe-4S] cluster-binding residues include C60, C68, and C71.

The cofactor is [4Fe-4S] cluster.

This is an uncharacterized protein from Methanocaldococcus jannaschii (strain ATCC 43067 / DSM 2661 / JAL-1 / JCM 10045 / NBRC 100440) (Methanococcus jannaschii).